A 418-amino-acid polypeptide reads, in one-letter code: PP2A regulatory subunit TAP46 (418 aa).

Residues 367–418 (KMIQESNSAWHKDGSRSAQEDEDAEEEKARAWDDWKDDNPRGAGNKKLTPCG) are disordered. Basic and acidic residues-rich tracts occupy residues 376 to 385 (WHKDGSRSAQ) and 393 to 406 (EKAR…DDNP).

This sequence belongs to the IGBP1/TAP42 family.

In terms of biological role, involved in the regulation of the TOR signaling pathway. Seems to act as a regulator of PP2A catalytic activity. The sequence is that of PP2A regulatory subunit TAP46 from Oryza sativa subsp. japonica (Rice).